The following is a 610-amino-acid chain: Elongation factor 4 (610 aa).

Residues 11–193 enclose the tr-type G domain; that stretch reads EKIRNFSIIA…QIVEKVPAPT (183 aa). GTP is bound by residues 23-28 and 140-143; these read DHGKST and NKID.

This sequence belongs to the TRAFAC class translation factor GTPase superfamily. Classic translation factor GTPase family. LepA subfamily.

It is found in the cell membrane. The enzyme catalyses GTP + H2O = GDP + phosphate + H(+). Functionally, required for accurate and efficient protein synthesis under certain stress conditions. May act as a fidelity factor of the translation reaction, by catalyzing a one-codon backward translocation of tRNAs on improperly translocated ribosomes. Back-translocation proceeds from a post-translocation (POST) complex to a pre-translocation (PRE) complex, thus giving elongation factor G a second chance to translocate the tRNAs correctly. Binds to ribosomes in a GTP-dependent manner. The protein is Elongation factor 4 of Streptococcus pyogenes serotype M6 (strain ATCC BAA-946 / MGAS10394).